Here is a 612-residue protein sequence, read N- to C-terminus: Cryptochrome-2 (612 aa).

Positions 1 to 485 are CNT2, binds chromophores to sense blue light and mediate CRY dimerization; the sequence is MKMDKKTIVW…TARELLAKAI (485 aa). One can recognise a Photolyase/cryptochrome alpha/beta domain in the interval 5–134; it reads KKTIVWFRRD…SVQSYNGDLL (130 aa). FAD is bound at residue Tyr232. Mg(2+)-binding residues include Asn235 and Ser243. 244 to 248 is an FAD binding site; the sequence is TSLLS. His355 provides a ligand contact to Mg(2+). FAD is bound by residues Asn356 and 387-389; that span reads DAD. 356–357 provides a ligand contact to ATP; sequence NR. Residue Asp406 coordinates ATP. The interval 486-612 is CCT2/CCE2, mediates blue light signaling; that stretch reads SRTREAQIMI…TTSLGKNGCK (127 aa). A disordered region spans residues 539–576; the sequence is GSKRVKPEEEEERDMKKSRGFDERELFSTAESSSSSSV. Residues 541–555 carry the Nuclear localization signal motif; that stretch reads KRVKPEEEEERDMKK. Over residues 551-564 the composition is skewed to basic and acidic residues; it reads RDMKKSRGFDEREL. Phosphoserine; by CK1 is present on Ser587. The disordered stretch occupies residues 590 to 612; that stretch reads KNLEGIQDSSDQITTSLGKNGCK. Residues 596-612 are compositionally biased toward polar residues; that stretch reads QDSSDQITTSLGKNGCK. Phosphoserine is present on residues Ser598 and Ser599. Thr603 is subject to Phosphothreonine; by CK1. Ser605 carries the phosphoserine modification.

The protein belongs to the DNA photolyase class-1 family. As to quaternary structure, homodimer. Blue-light dependent dimerization. Interacts with COP1 and PHYB in the nucleus. Binds reversibly to CIBs proteins such as BHLH63/CIB1, BHLH78/CIB2, BHLH74/CIB4 and BHLH76/CIB5 after blue light illumination to stimulate their transcription factor activities. Interacts with PIF4 and PIF5 in the nucleus in response to low blue light (LBL). Binds to SPA1 in response to blue light, this interaction prevents SPA1/COP1 complex formation but stimulates interaction with COP1, and thus avoid COP1-dependent degradation of the transcription factors CO and HY5 by the proteasome and promotes hypocotyl elongation and floral initiation. Binding to ATP mediates conformational changes which facilitate flavin binding. Interacts with BIC1 in both darkness and light. Interacts with NRP. The cofactor is FAD. (6R)-5,10-methylene-5,6,7,8-tetrahydrofolate is required as a cofactor. Phosphorylated by CK1.3 and CK1.4; in response to blue light. Required for degradation. Adopts an open conformation when phosphorylated upon photoexcitation and thus interacts with signaling partner proteins. Not autophosphorylated, even in complex with FAD cofactor. In terms of processing, ubiquitinated; in response to blue light. As to expression, mostly expressed in the shoot meristems and root tips, and, to a lower extent, in the cotyledons, hypocotyls, and roots.

It localises to the nucleus. The protein resides in the PML body. The protein localises to the cytoplasm. Photoreceptor that mediates primarily blue light inhibition of hypocotyl elongation and photoperiodic control of floral initiation, and regulates other light responses, including circadian rhythms, tropic growth, stomata opening, guard cell development, root development, bacterial and viral pathogen responses, abiotic stress responses, cell cycles, programmed cell death, apical dominance, fruit and ovule development, seed dormancy, and magnetoreception. Photoexcited cryptochromes interact with signaling partner proteins to alter gene expression at both transcriptional and post-translational levels and, consequently, regulate the corresponding metabolic and developmental programs. Blue-light absorbing flavoprotein that activates reversible flavin photoreduction via an electron transport chain comprising a tryptophan triad (W-321, W-374 and W-397), or via an alternative electron transport that involves small metabolites, including NADPH, NADH, and ATP. The half-life of the activated signaling state is about 16 minutes. Perceives low blue light (LBL) and responds by directly contacting two bHLH transcription factors, PIF4 and PIF5, at chromatin on E-box variant 5'-CA[CT]GTG-3' to promote their activity and stimulate specific gene expression to adapt global physiology (e.g. hypocotyl elongation and hyponastic growth in low blue light). In response to blue light, binds to CIB proteins (e.g. BHLH63/CIB1 and BHLH76/CIB5) to activate transcription and floral initiation. Mediates blue light-induced gene expression, floral initiation and hypocotyl elongation through the interaction with SPA1 that prevents formation of SPA1/COP1 complex but stimulates COP1 binding, and thus inhibits COP1-mediated degradation of transcription factors (e.g. CO and HY5). Promotes flowering time in continuous light (LL). Involved in shortening the circadian clock period, especially at 27 degrees Celsius, in blue light (BL). Required to maintain clock genes expression rhythm. Triggers nuclear accumulation of ROS in response to blue light illumination. Involved in blue light-dependent stomatal opening, transpiration and inhibition of stem and root growth, probably by regulating abscisic acid (ABA). Regulates the timing of flowering by promoting the expression of 'FLOWERING LOCUS T' (FT) in vascular bundles. Negatively regulated by 'FLOWERING LOCUS C' (FLC). General positive regulator of reversible low light-induced chromatin decompaction. Involved in triggering chromatin decondensation during floral transition. Together with phototropins, involved in phototropism regulation by various blue light fluence; blue light attenuates phototropism in high fluence rates (100 umol.m-2.s-1) but enhances phototropism in low fluence rates (&lt;1.0 umol.m-2.s-1). The effect of near-null magnetic field on flowering is altered by changes of blue light cycle and intensity in a CRY1/CRY2-dependent manner. Involved in the strigolactone signaling that regulates hypocotyl growth in response to blue light. Functionally, confers resistance to turnip crinkle virus (TCV) by preventing COP1-mediated proteasome-mediated degradation of RPP8/HRT, thus promoting its stability in light. Exposure to darkness or blue-light induces degradation of CRY2, and in turn of RPP8/HRT, resulting in susceptibility to TCV. This is Cryptochrome-2 from Arabidopsis thaliana (Mouse-ear cress).